The chain runs to 377 residues: Tryptophan--tRNA ligase, mitochondrial (377 aa).

ATP is bound by residues glutamine 21 and 28–31 (HLGN). The 'HIGH' region motif lies at 22–31 (PTSSALHLGN). Aspartate 181 lines the L-tryptophan pocket. ATP-binding positions include 193 to 195 (GED), 242 to 246 (KMSKS), and lysine 245. The 'KMSKS' region motif lies at 242 to 246 (KMSKS).

This sequence belongs to the class-I aminoacyl-tRNA synthetase family.

The protein resides in the mitochondrion matrix. It carries out the reaction tRNA(Trp) + L-tryptophan + ATP = L-tryptophyl-tRNA(Trp) + AMP + diphosphate + H(+). This Dictyostelium discoideum (Social amoeba) protein is Tryptophan--tRNA ligase, mitochondrial (wars2).